Reading from the N-terminus, the 685-residue chain is MNENISVSVRARPFNEKEVKDKEHCLWQFGNNNTITSLPPPITQPVSSLPPISTPIKSSSSSSTSTSAGSLKTPLKTPLKTPLKTPLKTNSTTTNTTVPASPAPTSSLTSKFVSNSYTYDHLFPPTCDNYEVYDTVARELVKSAMEGYNASIMAYGITSSGKTFTMTGSGKKNPGIIPLSIQDIFTYIQECKEREFLLRVSYLEIYNETVNDLLGVNQENFNLKIHEHPVTGVYVAGLKEEIVLSVEHVLSLISAGEAHRHVGSTSYNLQSSRSHTIFKMIIESKEVLPEGSGSGGLESPVRYSTLNLIDLAGSEKASESTISAIRNKEGSYINKSLLTLGTVISKLSEKDTGYIPYRDSKLTRVLQNSLSGNSRVAIICTITLASNNFEESHNTLKFASRAKKISNNAKVNEILDDKALLKQYRNEIAELKSKLSDALSTEKELQETLTEKEKMKITNQELLHKLVDAEKHRSLLESKINNLNKLILVSTSVNNSASKGGSGSGNGNGSRSTFVSPSQNSHHHHGDLGSITPNSFSNLLLQSPSQNNNNNSHISPLSQSTSSLTIGGGSGNGFESNELIQIQSKMAKLELELEEKNKKIDFLTSFNQDSALEKIKQLEGELVQRDMDLGLYQRESTRLQTLLSHKDEKISSLESKLRDILLKFKQIDSENTSLKSKIQEYEVMY.

The region spanning 4–405 (NISVSVRARP…LKFASRAKKI (402 aa)) is the Kinesin motor domain. Positions 36 to 105 (TSLPPPITQP…TTVPASPAPT (70 aa)) are disordered. Over residues 47–105 (SSLPPISTPIKSSSSSSTSTSAGSLKTPLKTPLKTPLKTPLKTNSTTTNTTVPASPAPT) the composition is skewed to low complexity. 156 to 163 (GITSSGKT) serves as a coordination point for ATP. A coiled-coil region spans residues 411–488 (VNEILDDKAL…KINNLNKLIL (78 aa)). The tract at residues 495-568 (NSASKGGSGS…QSTSSLTIGG (74 aa)) is disordered. Positions 511–520 (RSTFVSPSQN) are enriched in polar residues. A compositionally biased stretch (low complexity) spans 533 to 565 (PNSFSNLLLQSPSQNNNNNSHISPLSQSTSSLT). The stretch at 574 to 683 (FESNELIQIQ…LKSKIQEYEV (110 aa)) forms a coiled coil.

It belongs to the TRAFAC class myosin-kinesin ATPase superfamily. Kinesin family.

The protein localises to the cytoplasm. It localises to the cytoskeleton. Microtubule-associated force-producing protein that plays a role in organelle transport. Its motor activity is directed toward the microtubule's plus end. The polypeptide is Kinesin-related protein 11 (kif11) (Dictyostelium discoideum (Social amoeba)).